A 709-amino-acid polypeptide reads, in one-letter code: Elongation factor G (709 aa).

The 286-residue stretch at 10-295 (NQIRNIGIMA…AVVDYLPSPE (286 aa)) folds into the tr-type G domain. Residues 19 to 26 (AHIDAGKT), 91 to 95 (DTPGH), and 145 to 148 (NKMD) each bind GTP.

It belongs to the TRAFAC class translation factor GTPase superfamily. Classic translation factor GTPase family. EF-G/EF-2 subfamily.

It is found in the cytoplasm. Its function is as follows. Catalyzes the GTP-dependent ribosomal translocation step during translation elongation. During this step, the ribosome changes from the pre-translocational (PRE) to the post-translocational (POST) state as the newly formed A-site-bound peptidyl-tRNA and P-site-bound deacylated tRNA move to the P and E sites, respectively. Catalyzes the coordinated movement of the two tRNA molecules, the mRNA and conformational changes in the ribosome. The chain is Elongation factor G from Bifidobacterium adolescentis (strain ATCC 15703 / DSM 20083 / NCTC 11814 / E194a).